Here is a 248-residue protein sequence, read N- to C-terminus: uncharacterized protein (248 aa).

8-32 provides a ligand contact to NADP(+); that stretch reads EVALVTGASSGIGKAIALELASAGL. Position 134 (S134) interacts with substrate. Catalysis depends on Y147, which acts as the Proton acceptor.

Belongs to the short-chain dehydrogenases/reductases (SDR) family.

This is an uncharacterized protein from Sinorhizobium fredii (strain NBRC 101917 / NGR234).